Consider the following 404-residue polypeptide: Omega-3 fatty acid desaturase, chloroplastic (404 aa).

Residues 28–50 form a disordered region; sequence TVDSSSSPPIEEEPKTQRFDPGA. The Histidine box-1 motif lies at 121-125; that stretch reads HDCGH. Positions 157–161 match the Histidine box-2 motif; the sequence is HRTHH. The short motif at 324 to 328 is the Histidine box-3 element; it reads HVIHH.

Belongs to the fatty acid desaturase type 1 family.

Its subcellular location is the plastid. The protein localises to the chloroplast membrane. Its pathway is lipid metabolism; polyunsaturated fatty acid biosynthesis. Functionally, chloroplast omega-3 fatty acid desaturase introduces the third double bond in the biosynthesis of 16:3 and 18:3 fatty acids, important constituents of plant membranes. It is thought to use ferredoxin as an electron donor and to act on fatty acids esterified to galactolipids, sulfolipids and phosphatidylglycerol. The chain is Omega-3 fatty acid desaturase, chloroplastic (FAD7) from Brassica napus (Rape).